A 208-amino-acid polypeptide reads, in one-letter code: Large ribosomal subunit protein bL25 (208 aa).

A disordered region spans residues 163–208 (DYSYNHEPDEVVASILPPQKQEETEAESAAQDVEEPEKGTEEEKEE). The span at 198–208 (PEKGTEEEKEE) shows a compositional bias: basic and acidic residues.

It belongs to the bacterial ribosomal protein bL25 family. CTC subfamily. Part of the 50S ribosomal subunit; part of the 5S rRNA/L5/L18/L25 subcomplex. Contacts the 5S rRNA. Binds to the 5S rRNA independently of L5 and L18.

Functionally, this is one of the proteins that binds to the 5S RNA in the ribosome where it forms part of the central protuberance. This chain is Large ribosomal subunit protein bL25, found in Bacillus licheniformis (strain ATCC 14580 / DSM 13 / JCM 2505 / CCUG 7422 / NBRC 12200 / NCIMB 9375 / NCTC 10341 / NRRL NRS-1264 / Gibson 46).